We begin with the raw amino-acid sequence, 341 residues long: Thymidine kinase (341 aa).

Residue 19–26 (GAYGIGKT) participates in ATP binding. E48 functions as the Proton acceptor in the catalytic mechanism. Residues Y66 and Q90 each coordinate substrate. R183 provides a ligand contact to ATP. R189 is a substrate binding site.

It belongs to the herpesviridae thymidine kinase family. In terms of assembly, homodimer.

It catalyses the reaction thymidine + ATP = dTMP + ADP + H(+). Its function is as follows. Catalyzes the transfer of the gamma-phospho group of ATP to thymidine to generate dTMP in the salvage pathway of pyrimidine synthesis. The dTMP serves as a substrate for DNA polymerase during viral DNA replication. Allows the virus to be reactivated and to grow in non-proliferative cells lacking a high concentration of phosphorylated nucleic acid precursors. This chain is Thymidine kinase, found in Varicella-zoster virus (strain Dumas) (HHV-3).